The following is a 351-amino-acid chain: Beta-hexosaminidase (351 aa).

Substrate contacts are provided by residues aspartate 62, arginine 70, arginine 133, and 163-164 (KH). Histidine 176 (proton donor/acceptor) is an active-site residue. Aspartate 248 serves as the catalytic Nucleophile.

It belongs to the glycosyl hydrolase 3 family. NagZ subfamily. Monomer.

Its subcellular location is the cytoplasm. The enzyme catalyses Hydrolysis of terminal non-reducing N-acetyl-D-hexosamine residues in N-acetyl-beta-D-hexosaminides.. The protein operates within cell wall biogenesis; peptidoglycan recycling. Plays a role in peptidoglycan recycling by cleaving the terminal beta-1,4-linked N-acetylglucosamine (GlcNAc) from peptide-linked peptidoglycan fragments, giving rise to free GlcNAc, anhydro-N-acetylmuramic acid and anhydro-N-acetylmuramic acid-linked peptides. The polypeptide is Beta-hexosaminidase (Haemophilus influenzae (strain ATCC 51907 / DSM 11121 / KW20 / Rd)).